Reading from the N-terminus, the 310-residue chain is Quinolinate synthase (310 aa).

Residues His27 and Ser44 each contribute to the iminosuccinate site. A [4Fe-4S] cluster-binding site is contributed by Cys89. Residues 115–117 and Ser132 contribute to the iminosuccinate site; that span reads YVN. [4Fe-4S] cluster is bound at residue Cys175. Iminosuccinate is bound by residues 201-203 and Thr222; that span reads HPE. Residue Cys267 coordinates [4Fe-4S] cluster.

This sequence belongs to the quinolinate synthase family. Type 2 subfamily. [4Fe-4S] cluster serves as cofactor.

The protein resides in the cytoplasm. It carries out the reaction iminosuccinate + dihydroxyacetone phosphate = quinolinate + phosphate + 2 H2O + H(+). Its pathway is cofactor biosynthesis; NAD(+) biosynthesis; quinolinate from iminoaspartate: step 1/1. Its function is as follows. Catalyzes the condensation of iminoaspartate with dihydroxyacetone phosphate to form quinolinate. The chain is Quinolinate synthase from Thermus thermophilus (strain ATCC 27634 / DSM 579 / HB8).